The primary structure comprises 439 residues: Testican-1 (439 aa).

The first 21 residues, 1-21 (MPAIAVLAAAAAAWCFLQVES), serve as a signal peptide directing secretion. 5 disulfide bridges follow: Cys-86–Cys-97, Cys-91–Cys-107, Cys-136–Cys-166, Cys-139–Cys-159, and Cys-148–Cys-180. One can recognise a Kazal-like domain in the interval 130 to 182 (PSNLVKCKPCPVAQSAMVCGSDGHSYTSKCKLEFHACSTGKSLATLCDGPCPC). A glycan (O-linked (GalNAc...) threonine) is linked at Thr-228. The Thyroglobulin type-1 domain occupies 310 to 376 (GLPCQNEMNR…GSRKQGAVSC (67 aa)). Intrachain disulfides connect Cys-313–Cys-337, Cys-348–Cys-355, and Cys-357–Cys-376. O-linked (Xyl...) (glycosaminoglycan) serine glycosylation is found at Ser-383 and Ser-388. The disordered stretch occupies residues 415-439 (VHTRAVTEDDEDEDDDKEDEVGYIW). Residues 422–439 (EDDEDEDDDKEDEVGYIW) are compositionally biased toward acidic residues.

In terms of processing, O-glycosylated. Glycosaminoglycan that contains chondroitin sulfate and heparan sulfate.

The protein resides in the secreted. The protein localises to the extracellular space. It is found in the extracellular matrix. Functionally, may play a role in cell-cell and cell-matrix interactions. May contribute to various neuronal mechanisms in the central nervous system. In Homo sapiens (Human), this protein is Testican-1 (SPOCK1).